Reading from the N-terminus, the 146-residue chain is Large ribosomal subunit protein uL15 (146 aa).

The segment covering 1 to 18 (MKLHELKPSEGSRKERNR) has biased composition (basic and acidic residues). The segment at 1–50 (MKLHELKPSEGSRKERNRVGRGTGSGNGKTSGRGHKGQKARSGGGVRLGF) is disordered. Over residues 21–31 (RGTGSGNGKTS) the composition is skewed to gly residues.

Belongs to the universal ribosomal protein uL15 family. In terms of assembly, part of the 50S ribosomal subunit.

Its function is as follows. Binds to the 23S rRNA. The polypeptide is Large ribosomal subunit protein uL15 (Listeria welshimeri serovar 6b (strain ATCC 35897 / DSM 20650 / CCUG 15529 / CIP 8149 / NCTC 11857 / SLCC 5334 / V8)).